The following is a 229-amino-acid chain: Cytochrome c oxidase subunit 2 (229 aa).

Residues 1–26 (MANWTQLGLQDASSPLMEELIYFHDY) lie on the Mitochondrial intermembrane side of the membrane. A helical transmembrane segment spans residues 27–48 (TLIILTLITILVFYGLASLIVS). At 49–62 (SNTNRFFLEGQSLE) the chain is on the mitochondrial matrix side. Residues 63–82 (TIWTVIPAVILIFIALPSLQ) form a helical membrane-spanning segment. Residues 83 to 229 (LLYLIDEVNN…ENWVSNFLNE (147 aa)) lie on the Mitochondrial intermembrane side of the membrane. Positions 161, 196, 198, 200, 204, and 207 each coordinate Cu cation. Glu-198 lines the Mg(2+) pocket.

The protein belongs to the cytochrome c oxidase subunit 2 family. In terms of assembly, component of the cytochrome c oxidase (complex IV, CIV), a multisubunit enzyme composed of a catalytic core of 3 subunits and several supernumerary subunits. The complex exists as a monomer or a dimer and forms supercomplexes (SCs) in the inner mitochondrial membrane with ubiquinol-cytochrome c oxidoreductase (cytochrome b-c1 complex, complex III, CIII). Cu cation serves as cofactor.

The protein localises to the mitochondrion inner membrane. The catalysed reaction is 4 Fe(II)-[cytochrome c] + O2 + 8 H(+)(in) = 4 Fe(III)-[cytochrome c] + 2 H2O + 4 H(+)(out). Its function is as follows. Component of the cytochrome c oxidase, the last enzyme in the mitochondrial electron transport chain which drives oxidative phosphorylation. The respiratory chain contains 3 multisubunit complexes succinate dehydrogenase (complex II, CII), ubiquinol-cytochrome c oxidoreductase (cytochrome b-c1 complex, complex III, CIII) and cytochrome c oxidase (complex IV, CIV), that cooperate to transfer electrons derived from NADH and succinate to molecular oxygen, creating an electrochemical gradient over the inner membrane that drives transmembrane transport and the ATP synthase. Cytochrome c oxidase is the component of the respiratory chain that catalyzes the reduction of oxygen to water. Electrons originating from reduced cytochrome c in the intermembrane space (IMS) are transferred via the dinuclear copper A center (CU(A)) of subunit 2 and heme A of subunit 1 to the active site in subunit 1, a binuclear center (BNC) formed by heme A3 and copper B (CU(B)). The BNC reduces molecular oxygen to 2 water molecules using 4 electrons from cytochrome c in the IMS and 4 protons from the mitochondrial matrix. The sequence is that of Cytochrome c oxidase subunit 2 (COII) from Pisaster ochraceus (Ochre sea star).